The sequence spans 116 residues: Large ribosomal subunit protein bL19 (116 aa).

Belongs to the bacterial ribosomal protein bL19 family.

In terms of biological role, this protein is located at the 30S-50S ribosomal subunit interface and may play a role in the structure and function of the aminoacyl-tRNA binding site. The chain is Large ribosomal subunit protein bL19 from Clostridium novyi (strain NT).